Consider the following 151-residue polypeptide: D-aminoacyl-tRNA deacylase (151 aa).

A Gly-cisPro motif, important for rejection of L-amino acids motif is present at residues 137–138 (GP).

It belongs to the DTD family. Homodimer.

It is found in the cytoplasm. It carries out the reaction glycyl-tRNA(Ala) + H2O = tRNA(Ala) + glycine + H(+). The enzyme catalyses a D-aminoacyl-tRNA + H2O = a tRNA + a D-alpha-amino acid + H(+). Its function is as follows. An aminoacyl-tRNA editing enzyme that deacylates mischarged D-aminoacyl-tRNAs. Also deacylates mischarged glycyl-tRNA(Ala), protecting cells against glycine mischarging by AlaRS. Acts via tRNA-based rather than protein-based catalysis; rejects L-amino acids rather than detecting D-amino acids in the active site. By recycling D-aminoacyl-tRNA to D-amino acids and free tRNA molecules, this enzyme counteracts the toxicity associated with the formation of D-aminoacyl-tRNA entities in vivo and helps enforce protein L-homochirality. The polypeptide is D-aminoacyl-tRNA deacylase (Solibacter usitatus (strain Ellin6076)).